The chain runs to 253 residues: MAESAPRGFGRGGRGGRGRGRGRRGAKRDEEKEWVPVTKLGRLVKAGKIKSIEEIYLYSLPIKEYQIVDYFLPRLNDEVMKVVPVQKQTRAGQRTRFKAFVVIGDSDGHVGLGIKCAKEVATAIRGAIIMGKLSIMPIRRGYWGTALGDPHTVPVKVSGKCGSVTVRLVPAPRGAGLVAAPVTKRFLQLAGIEDCYTQSRGSTKTLGNFVKAAFAAASLTYGILTPNLWAERPFGQTPIEEYADILMQTEKKY.

Positions 1–30 are disordered; sequence MAESAPRGFGRGGRGGRGRGRGRRGAKRDE. A compositionally biased stretch (basic residues) spans 14 to 26; it reads RGGRGRGRGRRGA. In terms of domain architecture, S5 DRBM spans 75–138; the sequence is LNDEVMKVVP…IMGKLSIMPI (64 aa).

Belongs to the universal ribosomal protein uS5 family. In terms of assembly, component of the small ribosomal subunit (SSU). Mature yeast ribosomes consist of a small (40S) and a large (60S) subunit. The 40S small subunit contains 1 molecule of ribosomal RNA (18S rRNA) and at least 33 different proteins. The large 60S subunit contains 3 rRNA molecules (25S, 5.8S and 5S rRNA) and at least 46 different proteins. Interacts with snoRNA U3. Interacts with MPP10. Component of the ribosomal small subunit (SSU) processome composed of at least 40 protein subunits and snoRNA U3.

The protein localises to the cytoplasm. Functionally, component of the ribosome, a large ribonucleoprotein complex responsible for the synthesis of proteins in the cell. The small ribosomal subunit (SSU) binds messenger RNAs (mRNAs) and translates the encoded message by selecting cognate aminoacyl-transfer RNA (tRNA) molecules. The large subunit (LSU) contains the ribosomal catalytic site termed the peptidyl transferase center (PTC), which catalyzes the formation of peptide bonds, thereby polymerizing the amino acids delivered by tRNAs into a polypeptide chain. The nascent polypeptides leave the ribosome through a tunnel in the LSU and interact with protein factors that function in enzymatic processing, targeting, and the membrane insertion of nascent chains at the exit of the ribosomal tunnel. Plays a role in the assembly and function of the 40S ribosomal subunit. Mutations in this protein affects the control of translational fidelity. Involved in nucleolar processing of pre-18S ribosomal RNA and ribosome assembly. Its function is as follows. Component of the ribosome, a large ribonucleoprotein complex responsible for the synthesis of proteins in the cell. The small ribosomal subunit (SSU) binds messenger RNAs (mRNAs) and translates the encoded message by selecting cognate aminoacyl-transfer RNA (tRNA) molecules. The large subunit (LSU) contains the ribosomal catalytic site termed the peptidyl transferase center (PTC), which catalyzes the formation of peptide bonds, thereby polymerizing the amino acids delivered by tRNAs into a polypeptide chain. The nascent polypeptides leave the ribosome through a tunnel in the LSU and interact with protein factors that function in enzymatic processing, targeting, and the membrane insertion of nascent chains at the exit of the ribosomal tunnel. uS5 is important for the assembly and function of the 40S ribosomal subunit. Mutations in this protein affects the control of translational fidelity. Involved in nucleolar processing of pre-18S ribosomal RNA and ribosome assembly. The sequence is that of Small ribosomal subunit protein uS5 (rps2) from Schizosaccharomyces pombe (strain 972 / ATCC 24843) (Fission yeast).